The sequence spans 324 residues: MKSALCNRFFILLPWILIVIIMLDVDPRRPAPQLTSRPYFSPHTVGCGGSRVPLRRSSPGRDAAEKRNESRPQLQPEPRLPTIYAITPTYSRPVQKAELTRLANTFRQVAQLHWILVEDRATRSELVSSFLARAGLPNTHLHVPTPRRYKRPWLPRATEQRNAGLAWLRQRHQHQSAQPGVLFFADDDNTYSLELFQEMRTTRKVSVWPVGLVGGRRYERPLVKNGKVVGWYTGWREDRPFAIDMAGFAVSLQVILSNPKAVFKRRGSQPGMQESDFLKQITTVDELEPKANNCTKVLVWHTRTEKVNLANEPKYHMDTVNIEV.

Residues Met-1–Lys-2 are Cytoplasmic-facing. The helical; Signal-anchor for type II membrane protein transmembrane segment at Ser-3–Leu-23 threads the bilayer. At Asp-24–Val-324 the chain is on the lumenal side. The segment at Leu-34 to Pro-78 is disordered. The N-linked (GlcNAc...) asparagine glycan is linked to Asn-68. Asp-188 is a binding site for Mn(2+). Glu-274 acts as the Proton acceptor in catalysis. An N-linked (GlcNAc...) asparagine glycan is attached at Asn-293.

The protein belongs to the glycosyltransferase 43 family. In terms of assembly, homodimer. Requires Mn(2+) as cofactor. In terms of tissue distribution, expressed in the cerebral cortex, cerebellum and whole brain.

It is found in the golgi apparatus membrane. It catalyses the reaction 3-O-(beta-D-galactosyl-(1-&gt;3)-beta-D-galactosyl-(1-&gt;4)-beta-D-xylosyl)-L-seryl-[protein] + UDP-alpha-D-glucuronate = 3-O-(beta-D-GlcA-(1-&gt;3)-beta-D-Gal-(1-&gt;3)-beta-D-Gal-(1-&gt;4)-beta-D-Xyl)-L-seryl-[protein] + UDP + H(+). The protein operates within protein modification; protein glycosylation. In terms of biological role, involved in the biosynthesis of L2/HNK-1 carbohydrate epitope on both glycolipids and glycoproteins. Substrates include asialo-orosomucoid (ASOR), paragloboside (lacto-N-neotetraosylceramide), Gal-beta-1,4-GlcNAc-beta-1,3-Gal-beta-1,4-Glc-pyridylamine and Gal-beta-1,3-GlcNAc-beta-1,3-Gal-beta-1,4-Glc-pyridylamine. The polypeptide is Galactosylgalactosylxylosylprotein 3-beta-glucuronosyltransferase 2 (B3gat2) (Rattus norvegicus (Rat)).